Consider the following 984-residue polypeptide: Vacuolar sorting protein 3 (984 aa).

In terms of domain architecture, CNH spans 21–339 (KIRALSLSPI…GCGPSLLAAD (319 aa)). Residues 663-844 (VLTSDKRTEE…YLDPQNGKEP (182 aa)) form a CHCR repeat.

The protein belongs to the TRAP1 family. As to quaternary structure, component of the class C core vacuole/endosome tethering (CORVET) complex. Their common core is composed of the class C Vps core proteins VPS11, VCL1, VPS18 and VPS33, which in CORVET further associates with VPS3. Interacts directly with VPS11. Binds to RABF2A and RABF2B.

It is found in the endosome membrane. The protein resides in the cytoplasm. Essential protein required during embryogenesis. Believed to act as a component of the putative class C core vacuole/endosome tethering (CORVET) endosomal tethering complexes. CORVET is required for vacuolar transport of SYP22. Involved in root development. Plays a role in vesicle-mediated protein trafficking of the endocytic membrane transport pathway. This Arabidopsis thaliana (Mouse-ear cress) protein is Vacuolar sorting protein 3.